A 62-amino-acid chain; its full sequence is Large ribosomal subunit protein bL33 (62 aa).

Belongs to the bacterial ribosomal protein bL33 family.

The chain is Large ribosomal subunit protein bL33 from Phocaeicola vulgatus (strain ATCC 8482 / DSM 1447 / JCM 5826 / CCUG 4940 / NBRC 14291 / NCTC 11154) (Bacteroides vulgatus).